The chain runs to 248 residues: Small ribosomal subunit protein uS2 (248 aa).

Belongs to the universal ribosomal protein uS2 family.

This Leptothrix cholodnii (strain ATCC 51168 / LMG 8142 / SP-6) (Leptothrix discophora (strain SP-6)) protein is Small ribosomal subunit protein uS2.